A 304-amino-acid polypeptide reads, in one-letter code: Acetyl-coenzyme A carboxylase carboxyl transferase subunit beta (304 aa).

Positions 23–292 (VWTKCDSCGQ…PNPEAPREGV (270 aa)) constitute a CoA carboxyltransferase N-terminal domain. Positions 27, 30, 46, and 49 each coordinate Zn(2+). The C4-type zinc finger occupies 27-49 (CDSCGQVLYRAELERNLEVCPKC). The disordered stretch occupies residues 284 to 304 (NPEAPREGVVVPPVPDQEPEA). The segment covering 295 to 304 (PPVPDQEPEA) has biased composition (pro residues).

It belongs to the AccD/PCCB family. As to quaternary structure, acetyl-CoA carboxylase is a heterohexamer composed of biotin carboxyl carrier protein (AccB), biotin carboxylase (AccC) and two subunits each of ACCase subunit alpha (AccA) and ACCase subunit beta (AccD). Zn(2+) is required as a cofactor.

It is found in the cytoplasm. The enzyme catalyses N(6)-carboxybiotinyl-L-lysyl-[protein] + acetyl-CoA = N(6)-biotinyl-L-lysyl-[protein] + malonyl-CoA. The protein operates within lipid metabolism; malonyl-CoA biosynthesis; malonyl-CoA from acetyl-CoA: step 1/1. Its function is as follows. Component of the acetyl coenzyme A carboxylase (ACC) complex. Biotin carboxylase (BC) catalyzes the carboxylation of biotin on its carrier protein (BCCP) and then the CO(2) group is transferred by the transcarboxylase to acetyl-CoA to form malonyl-CoA. The polypeptide is Acetyl-coenzyme A carboxylase carboxyl transferase subunit beta (Shigella boydii serotype 4 (strain Sb227)).